Here is a 330-residue protein sequence, read N- to C-terminus: D-alanine--D-alanine ligase (330 aa).

An ATP-grasp domain is found at 120 to 326 (KLWYDALGIP…FKTFLQKAVL (207 aa)). 150 to 205 (AFKQWGGLFVKAACQGSSVGCYKVTSEEELAQAINGAFGYSQQVLVEKAVKPRELE) lines the ATP pocket. Residues D280, E293, and N295 each coordinate Mg(2+).

It belongs to the D-alanine--D-alanine ligase family. Mg(2+) is required as a cofactor. Requires Mn(2+) as cofactor.

The protein localises to the cytoplasm. It catalyses the reaction 2 D-alanine + ATP = D-alanyl-D-alanine + ADP + phosphate + H(+). Its pathway is cell wall biogenesis; peptidoglycan biosynthesis. Cell wall formation. The protein is D-alanine--D-alanine ligase of Aliivibrio fischeri (strain MJ11) (Vibrio fischeri).